Consider the following 609-residue polypeptide: Manganese lipoxygenase (609 aa).

Positions 1–16 are cleaved as a signal peptide; that stretch reads MRLLLSIAGLTTVVNA. N24, N115, N156, and N193 each carry an N-linked (GlcNAc...) asparagine glycan. The 493-residue stretch at 117 to 609 folds into the Lipoxygenase domain; it reads SLKAIQDHGG…PGVIPFYLSV (493 aa). Mn(2+)-binding residues include H289 and H294. A glycan (N-linked (GlcNAc...) asparagine) is linked at N385. Residues H474 and N478 each coordinate Mn(2+). N539 carries an N-linked (GlcNAc...) asparagine glycan. A Mn(2+)-binding site is contributed by V609.

The protein belongs to the lipoxygenase family. Manganese lipoxygenase subfamily. It depends on Mn(2+) as a cofactor. N- and O-glycosylated.

The protein resides in the secreted. It catalyses the reaction (9Z,12Z)-octadecadienoate + O2 = (9S)-hydroperoxy-(10E,12Z)-octadecadienoate. The catalysed reaction is (9Z,12Z)-octadecadienoate + O2 = (11S)-hydroperoxy-(9Z,12Z)-octadecadienoate. The enzyme catalyses (9Z,12Z)-octadecadienoate + O2 = (13R)-hydroperoxy-(9Z,11E)-octadecadienoate. It carries out the reaction (9Z,12Z,15Z)-octadecatrienoate + O2 = (11R)-hydroperoxy-(9Z,12Z,15Z)-octadecatrienoate. Its function is as follows. Lipoxygenase that metabolizes linoleic and alpha-linolenic acids to 9-, 11- and 13-hydroperoxy fatty acids. Oxidizes linoleic acid to mainly 9S- and 13R-HPODE and alpha-linolenic acid to 11R-HPOTrE. This is Manganese lipoxygenase from Colletotrichum gloeosporioides (strain Cg-14) (Anthracnose fungus).